A 389-amino-acid chain; its full sequence is Probable dual-specificity RNA methyltransferase RlmN (389 aa).

Glu-114 serves as the catalytic Proton acceptor. The region spanning 120–358 (QHYGLSVCVT…CVVRQEHGTD (239 aa)) is the Radical SAM core domain. Cys-127 and Cys-363 are joined by a disulfide. Cys-134, Cys-138, and Cys-141 together coordinate [4Fe-4S] cluster. Residues 186-187 (GE), Ser-218, 241-243 (SLH), and Asn-319 each bind S-adenosyl-L-methionine. Residue Cys-363 is the S-methylcysteine intermediate of the active site. The interval 370-389 (TMKRDRQKAVAEASGKSEGK) is disordered. The span at 371 to 389 (MKRDRQKAVAEASGKSEGK) shows a compositional bias: basic and acidic residues.

The protein belongs to the radical SAM superfamily. RlmN family. [4Fe-4S] cluster is required as a cofactor.

It localises to the cytoplasm. It carries out the reaction adenosine(2503) in 23S rRNA + 2 reduced [2Fe-2S]-[ferredoxin] + 2 S-adenosyl-L-methionine = 2-methyladenosine(2503) in 23S rRNA + 5'-deoxyadenosine + L-methionine + 2 oxidized [2Fe-2S]-[ferredoxin] + S-adenosyl-L-homocysteine. It catalyses the reaction adenosine(37) in tRNA + 2 reduced [2Fe-2S]-[ferredoxin] + 2 S-adenosyl-L-methionine = 2-methyladenosine(37) in tRNA + 5'-deoxyadenosine + L-methionine + 2 oxidized [2Fe-2S]-[ferredoxin] + S-adenosyl-L-homocysteine. Functionally, specifically methylates position 2 of adenine 2503 in 23S rRNA and position 2 of adenine 37 in tRNAs. This is Probable dual-specificity RNA methyltransferase RlmN from Streptococcus thermophilus (strain ATCC BAA-250 / LMG 18311).